Consider the following 168-residue polypeptide: S-ribosylhomocysteine lyase (168 aa).

Fe cation-binding residues include His-54, His-58, and Cys-128.

This sequence belongs to the LuxS family. In terms of assembly, homodimer. Requires Fe cation as cofactor.

The catalysed reaction is S-(5-deoxy-D-ribos-5-yl)-L-homocysteine = (S)-4,5-dihydroxypentane-2,3-dione + L-homocysteine. In terms of biological role, involved in the synthesis of autoinducer 2 (AI-2) which is secreted by bacteria and is used to communicate both the cell density and the metabolic potential of the environment. The regulation of gene expression in response to changes in cell density is called quorum sensing. Catalyzes the transformation of S-ribosylhomocysteine (RHC) to homocysteine (HC) and 4,5-dihydroxy-2,3-pentadione (DPD). The protein is S-ribosylhomocysteine lyase of Neisseria gonorrhoeae (strain ATCC 700825 / FA 1090).